We begin with the raw amino-acid sequence, 259 residues long: Deoxyribose-phosphate aldolase (259 aa).

Catalysis depends on Asp102, which acts as the Proton donor/acceptor. Lys167 functions as the Schiff-base intermediate with acetaldehyde in the catalytic mechanism. The active-site Proton donor/acceptor is the Lys201.

It belongs to the DeoC/FbaB aldolase family. DeoC type 2 subfamily.

The protein resides in the cytoplasm. The enzyme catalyses 2-deoxy-D-ribose 5-phosphate = D-glyceraldehyde 3-phosphate + acetaldehyde. It functions in the pathway carbohydrate degradation; 2-deoxy-D-ribose 1-phosphate degradation; D-glyceraldehyde 3-phosphate and acetaldehyde from 2-deoxy-alpha-D-ribose 1-phosphate: step 2/2. Catalyzes a reversible aldol reaction between acetaldehyde and D-glyceraldehyde 3-phosphate to generate 2-deoxy-D-ribose 5-phosphate. The polypeptide is Deoxyribose-phosphate aldolase (Erwinia tasmaniensis (strain DSM 17950 / CFBP 7177 / CIP 109463 / NCPPB 4357 / Et1/99)).